Reading from the N-terminus, the 404-residue chain is Cysteine desulfurase IscS (404 aa).

Pyridoxal 5'-phosphate is bound by residues 75–76 (AT), N155, Q183, and 203–205 (SGH). Residue K206 is modified to N6-(pyridoxal phosphate)lysine. Pyridoxal 5'-phosphate is bound at residue T243. C328 acts as the Cysteine persulfide intermediate in catalysis. Residue C328 participates in [2Fe-2S] cluster binding.

This sequence belongs to the class-V pyridoxal-phosphate-dependent aminotransferase family. NifS/IscS subfamily. As to quaternary structure, homodimer. Forms a heterotetramer with IscU, interacts with other sulfur acceptors. Pyridoxal 5'-phosphate serves as cofactor.

The protein localises to the cytoplasm. It catalyses the reaction (sulfur carrier)-H + L-cysteine = (sulfur carrier)-SH + L-alanine. It participates in cofactor biosynthesis; iron-sulfur cluster biosynthesis. In terms of biological role, master enzyme that delivers sulfur to a number of partners involved in Fe-S cluster assembly, tRNA modification or cofactor biosynthesis. Catalyzes the removal of elemental sulfur and selenium atoms from cysteine and selenocysteine to produce alanine. Functions as a sulfur delivery protein for Fe-S cluster synthesis onto IscU, an Fe-S scaffold assembly protein, as well as other S acceptor proteins. Also functions as a selenium delivery protein in the pathway for the biosynthesis of selenophosphate. In Salmonella typhi, this protein is Cysteine desulfurase IscS.